Reading from the N-terminus, the 279-residue chain is S-methyl-5'-thioadenosine phosphorylase (279 aa).

Phosphate is bound by residues Ser13, 55-56, and 88-89; these read RH and TA. Residue Met191 coordinates substrate. Thr192 contributes to the phosphate binding site. 215–217 lines the substrate pocket; sequence DYD.

This sequence belongs to the PNP/MTAP phosphorylase family. MTAP subfamily. In terms of assembly, homotrimer.

It localises to the cytoplasm. Its subcellular location is the nucleus. It carries out the reaction S-methyl-5'-thioadenosine + phosphate = 5-(methylsulfanyl)-alpha-D-ribose 1-phosphate + adenine. It participates in amino-acid biosynthesis; L-methionine biosynthesis via salvage pathway; S-methyl-5-thio-alpha-D-ribose 1-phosphate from S-methyl-5'-thioadenosine (phosphorylase route): step 1/1. Catalyzes the reversible phosphorylation of S-methyl-5'-thioadenosine (MTA) to adenine and 5-methylthioribose-1-phosphate. Involved in the breakdown of MTA, a major by-product of polyamine biosynthesis. Responsible for the first step in the methionine salvage pathway after MTA has been generated from S-adenosylmethionine. Has broad substrate specificity with 6-aminopurine nucleosides as preferred substrates. The protein is S-methyl-5'-thioadenosine phosphorylase of Anopheles darlingi (Mosquito).